Here is a 329-residue protein sequence, read N- to C-terminus: Ribosomal protein L11 methyltransferase (329 aa).

S-adenosyl-L-methionine contacts are provided by Thr177, Gly198, Asp220, and Asn264.

It belongs to the methyltransferase superfamily. PrmA family.

Its subcellular location is the cytoplasm. The catalysed reaction is L-lysyl-[protein] + 3 S-adenosyl-L-methionine = N(6),N(6),N(6)-trimethyl-L-lysyl-[protein] + 3 S-adenosyl-L-homocysteine + 3 H(+). Methylates ribosomal protein L11. This is Ribosomal protein L11 methyltransferase from Helicobacter acinonychis (strain Sheeba).